The chain runs to 1000 residues: Chromosome transmission fidelity protein 18 homolog (1000 aa).

Disordered stretches follow at residues 53–89, 130–159, and 272–301; these read SAGDPIRSNANSKPTGDSNGEALACIDTSKSKKRDAS, AGNSTALSDDITPPPSPNHSPKKNERDSKF, and EFGENDSEILENDDNAGEEDDEDEPSSHSL. Polar residues predominate over residues 60 to 70; sequence SNANSKPTGDS. Acidic residues predominate over residues 272-295; it reads EFGENDSEILENDDNAGEEDDEDE. 396–403 is an ATP binding site; the sequence is GPPGLGKT. The segment covering 888–898 has biased composition (polar residues); that stretch reads ARNAGRDNTTA. A disordered region spans residues 888-916; that stretch reads ARNAGRDNTTAAAAVKTADPKGAKSAAKP.

Belongs to the activator 1 small subunits family. CTF18 subfamily. As to quaternary structure, component of the CTF18-RFC complex, which consists of ctf18, ctf8, dcc1, rfc2, rfc3, rfc4 and rfc5. The CTF18-RFC complex associates with pcna.

The protein localises to the nucleus. Chromosome cohesion factor involved in sister chromatid cohesion and fidelity of chromosome transmission. Component of one of the cell nuclear antigen loader complexes, CTF18-replication factor C (CTF18-RFC), which consists of ctf18, ctf8, dcc1, rfc2, rfc3, rfc4 and rfc5. The CTF18-RFC complex binds to single-stranded and primed DNAs and has weak ATPase activity that is stimulated by the presence of primed DNA, replication protein A (RPA) and by proliferating cell nuclear antigen (pcna). The CTF18-RFC complex catalyzes the ATP-dependent loading of pcna onto primed and gapped DNA. The protein is Chromosome transmission fidelity protein 18 homolog (chtf18) of Xenopus laevis (African clawed frog).